The following is a 767-amino-acid chain: DNA topoisomerase 1 (767 aa).

The segment covering 1 to 23 has biased composition (basic and acidic residues); it reads MSGDHLHNDSQIEADFRLNDSHK. The tract at residues 1 to 201 is disordered; that stretch reads MSGDHLHNDS…NKKKKPKKEE (201 aa). N-acetylserine is present on Ser-2. Phosphoserine occurs at positions 2 and 10. The segment covering 24 to 39 has biased composition (basic residues); sequence HKDKHKDREHRHKEHK. Over residues 40–110 the composition is skewed to basic and acidic residues; it reads KDKDKDREKS…DAKIKKEKEN (71 aa). Ser-59 bears the Phosphoserine mark. Residue Lys-103 forms a Glycyl lysine isopeptide (Lys-Gly) (interchain with G-Cter in SUMO2) linkage. Lys-105 is covalently cross-linked (Glycyl lysine isopeptide (Lys-Gly) (interchain with G-Cter in SUMO); alternate). Lys-105 participates in a covalent cross-link: Glycyl lysine isopeptide (Lys-Gly) (interchain with G-Cter in SUMO2); alternate. Residue Ser-114 is modified to Phosphoserine. A Glycyl lysine isopeptide (Lys-Gly) (interchain with G-Cter in SUMO); alternate cross-link involves residue Lys-119. Lys-119 participates in a covalent cross-link: Glycyl lysine isopeptide (Lys-Gly) (interchain with G-Cter in SUMO2); alternate. A Glycyl lysine isopeptide (Lys-Gly) (interchain with G-Cter in SUMO1); alternate cross-link involves residue Lys-119. Residues 131 to 168 are compositionally biased toward basic and acidic residues; sequence PKEDIKPLKRLRDEDDADYKPKKIKTEDIKKEKKRKSE. Glycyl lysine isopeptide (Lys-Gly) (interchain with G-Cter in SUMO2) cross-links involve residues Lys-136 and Lys-150. A Glycyl lysine isopeptide (Lys-Gly) (interchain with G-Cter in SUMO); alternate cross-link involves residue Lys-155. Residue Lys-155 forms a Glycyl lysine isopeptide (Lys-Gly) (interchain with G-Cter in SUMO2); alternate linkage. Residues Lys-160 and Lys-166 each participate in a glycyl lysine isopeptide (Lys-Gly) (interchain with G-Cter in SUMO2) cross-link. Residue Lys-174 forms a Glycyl lysine isopeptide (Lys-Gly) (interchain with G-Cter in SUMO2); alternate linkage. Lys-174 carries the N6-acetyllysine; alternate modification. Over residues 181 to 201 the composition is skewed to basic and acidic residues; that stretch reads KDKDKKVAEPDNKKKKPKKEE. A Glycyl lysine isopeptide (Lys-Gly) (interchain with G-Cter in SUMO2) cross-link involves residue Lys-206. Lys-282 bears the N6-acetyllysine mark. Residue Lys-338 forms a Glycyl lysine isopeptide (Lys-Gly) (interchain with G-Cter in SUMO2) linkage. Interaction with DNA stretches follow at residues 427 to 428 and 490 to 495; these read KY and RAGNEK. The 334-residue stretch at 434-767 folds into the Topo IB-type catalytic domain; it reads SSRIKGEKDW…IDMTDEDYEF (334 aa). Ser-508 carries the post-translational modification Phosphoserine; by CK2. Lys-551 participates in a covalent cross-link: Glycyl lysine isopeptide (Lys-Gly) (interchain with G-Cter in SUMO2). The tract at residues 587–589 is interaction with DNA; that stretch reads TAK. Glycyl lysine isopeptide (Lys-Gly) (interchain with G-Cter in SUMO2) cross-links involve residues Lys-644, Lys-702, and Lys-714. The O-(3'-phospho-DNA)-tyrosine intermediate role is filled by Tyr-725.

It belongs to the type IB topoisomerase family. Monomer. Interacts with ERCC6. Interacts with TPRN; TPRN interacts with a number of DNA damage response proteins, is recruited to sites of DNA damage and may play a role in DNA damage repair. In terms of processing, sumoylated. Lys-119 is the main site of sumoylation. Sumoylation plays a role in partitioning TOP1 between nucleoli and nucleoplasm. Levels are dramatically increased on camptothecin (CPT) treatment. Post-translationally, phosphorylation at Ser-508 by CK2 increases binding to supercoiled DNA and sensitivity to camptothecin.

The protein localises to the nucleus. The protein resides in the nucleolus. It is found in the nucleoplasm. It carries out the reaction ATP-independent breakage of single-stranded DNA, followed by passage and rejoining.. Its function is as follows. Releases the supercoiling and torsional tension of DNA introduced during the DNA replication and transcription by transiently cleaving and rejoining one strand of the DNA duplex. Introduces a single-strand break via transesterification at a target site in duplex DNA. The scissile phosphodiester is attacked by the catalytic tyrosine of the enzyme, resulting in the formation of a DNA-(3'-phosphotyrosyl)-enzyme intermediate and the expulsion of a 5'-OH DNA strand. The free DNA strand then rotates around the intact phosphodiester bond on the opposing strand, thus removing DNA supercoils. Finally, in the religation step, the DNA 5'-OH attacks the covalent intermediate to expel the active-site tyrosine and restore the DNA phosphodiester backbone. Regulates the alternative splicing of tissue factor (F3) pre-mRNA in endothelial cells. Involved in the circadian transcription of the core circadian clock component BMAL1 by altering the chromatin structure around the ROR response elements (ROREs) on the BMAL1 promoter. The sequence is that of DNA topoisomerase 1 (Top1) from Mus musculus (Mouse).